Consider the following 733-residue polypeptide: MSFSNPRRRTPVTRPGTDCEHGLSLKTTMTLRKGATFHSPTSPSASSAAGDFVPPTLTRSQSAFDDVVDASRRRIAMTLNDIDEALSKASLSDKSPRPKPLRDTSLPVPRGFLEPPVVDPAMNKQEPERRVLRPRSVRRTRNHASDSGIGSSVVSTNDKAGAADSTKKPQASALTRSAASSTTAMLPSLSHRAVNRIREHTLRPLLEKPTLKEFEPIVLDVPRRIRSKEIICLRDLEKTLIFMAPEKAKSAALYLDFCLTSVRCIQATVEYLTDREQVRPGDRPYTNGYFIDLKEQIYQYGKQLAAIKEKGSLADDMDIDPSDEVRLYGGVAENGRPAELIRVKKDGTAYSMATGKIVDMTESPTPLKRSLSEQREDEEEIMRSMARRKKNATPEDVAPKKCREPGCTKEFKRPCDLTKHEKTHSRPWKCPIPTCKYHEYGWPTEKEMDRHINDKHSDAPAMYECLFKPCPYKSKRESNCKQHMEKAHGWTYVRTKTNGKKAPSQNGSTAQQTPPLANVSTPSSTPSYSVPTPPQDQVMSTDFPMYPADDDWLATYGAQPNTIDAMDLGLENLSPASAASSYEQYPPYQNGSTFIINDEDIYAAHVQIPAQLPTPEQVYTKMMPQQMPVYHVQQEPCTTVPILGEPQFSPNAQQNAVLYTPTSLREVDEGFDESYAADGADFQLFPATVDKTDVFQSLFTDMPSANLGFSQTTQPDIFNQIDWSNLDYQGFQE.

Basic residues predominate over residues 1–11 (MSFSNPRRRTP). Disordered regions lie at residues 1-22 (MSFS…CEHG), 34-63 (GATF…SQSA), and 89-183 (ASLS…SSTT). Over residues 39 to 49 (SPTSPSASSAA) the composition is skewed to low complexity. A compositionally biased stretch (basic residues) spans 132-142 (LRPRSVRRTRN). Residues 148–158 (GIGSSVVSTND) are compositionally biased toward polar residues. Residues 171–183 (ASALTRSAASSTT) show a composition bias toward low complexity. 3 C2H2-type zinc fingers span residues 400-424 (KKCR…EKTH), 428-456 (WKCP…NDKH), and 463-488 (YECL…EKAH). Residues 497 to 533 (TNGKKAPSQNGSTAQQTPPLANVSTPSSTPSYSVPTP) form a disordered region. Polar residues predominate over residues 503-515 (PSQNGSTAQQTPP). Over residues 519 to 530 (VSTPSSTPSYSV) the composition is skewed to low complexity.

It is found in the nucleus. In terms of biological role, binds to the promoter of the cbh1 gene and activates transcription. This is Zinc finger transcription factor ace1 (ace1) from Hypocrea jecorina (Trichoderma reesei).